The primary structure comprises 88 residues: Large ribosomal subunit protein bL27 (88 aa).

The disordered stretch occupies residues 1–22; the sequence is MAHKKGASSSRNGRDSNAQRLG. Positions 7–19 are enriched in polar residues; sequence ASSSRNGRDSNAQ.

This sequence belongs to the bacterial ribosomal protein bL27 family.

This Mycolicibacterium gilvum (strain PYR-GCK) (Mycobacterium gilvum (strain PYR-GCK)) protein is Large ribosomal subunit protein bL27.